Consider the following 200-residue polypeptide: Ciliary neurotrophic factor (200 aa).

This sequence belongs to the CNTF family. Homodimer. In terms of tissue distribution, nervous system.

The protein resides in the cytoplasm. In terms of biological role, CNTF is a survival factor for various neuronal cell types. Seems to prevent the degeneration of motor axons after axotomy. The polypeptide is Ciliary neurotrophic factor (CNTF) (Homo sapiens (Human)).